The sequence spans 398 residues: Phosphoglycerate kinase (398 aa).

Substrate is bound by residues 21-23 (DFN), Arg36, 59-62 (HLGR), Arg119, and Arg157. Residues Lys208, Gly296, Glu327, and 354–357 (GGDS) contribute to the ATP site.

Belongs to the phosphoglycerate kinase family. Monomer.

Its subcellular location is the cytoplasm. It carries out the reaction (2R)-3-phosphoglycerate + ATP = (2R)-3-phospho-glyceroyl phosphate + ADP. Its pathway is carbohydrate degradation; glycolysis; pyruvate from D-glyceraldehyde 3-phosphate: step 2/5. The protein is Phosphoglycerate kinase of Streptococcus uberis (strain ATCC BAA-854 / 0140J).